The sequence spans 250 residues: Replicating protein (250 aa).

Disordered regions lie at residues 1–23 and 168–250; these read MFQQ…PCEK and KAHM…KAFE. 2 stretches are compositionally biased toward basic and acidic residues: residues 13–23 and 178–190; these read GTDEPAHPCEK and DRLR…RTRA. Over residues 218–237 the composition is skewed to polar residues; sequence SRCSFTTPNRPRRTLPSSHP.

Required for replication. It likely regulates pTAR copy number. This chain is Replicating protein (repA), found in Rhizobium radiobacter (Agrobacterium tumefaciens).